A 565-amino-acid chain; its full sequence is MSQEFDYIIVGAGSAGNTLATRLTEDAGVTVLLLEAGGPDYRFDFRTQMPAALAFPLQGRRYNWAYETDPEPYMDGRRMECGRGKGLGGSSLINGMCYIRGNAMDFDGWAELPGLEDWTYLDCLPYFRKAETRDIGPNDYHGGEGPVSVTTPKAGNNPLFHAMVEAGVQAGYPRTEDLNGYQQEGFGPMDRTVTKNGRRSSTARGYLDQAKKRPNLTIVTHALTDRVLFDGKRAIGVTYLVGDSEERVEARARKEVIVSSGAIASPQLLQRSGVGPRALLESLDIPVVHDLPGVGENLQDHLELYLQYACTQPVSLYPSLLWWNQPAIGAEWMFNGTGIGASNQFEAGGFIRTRPEFKWPNIQYHFLPVAINYNGSNGVKEHGFQAHMGSMRSPARGRIQVKSKDPRQHPSILFNYMSTEQDWQEFRDGIRLTREIMAQPALDPYRGREISPGADVQTDEQLDKFIREHAETAFHPSCSCKMGTDDMAVVDGEGRVHGMKGLRVVDASIMPLIITGNLNATTIMIAEKISDKIRGRKPLPRSTAKYYVAGDAPVKGKPMREVKQG.

6 to 35 (DYIIVGAGSAGNTLATRLTEDAGVTVLLLE) contacts FAD. The disordered stretch occupies residues 182–201 (QQEGFGPMDRTVTKNGRRSS). His475 serves as the catalytic Proton acceptor.

This sequence belongs to the GMC oxidoreductase family. The cofactor is FAD.

It carries out the reaction choline + A = betaine aldehyde + AH2. It catalyses the reaction betaine aldehyde + NAD(+) + H2O = glycine betaine + NADH + 2 H(+). It functions in the pathway amine and polyamine biosynthesis; betaine biosynthesis via choline pathway; betaine aldehyde from choline (cytochrome c reductase route): step 1/1. Involved in the biosynthesis of the osmoprotectant glycine betaine. Catalyzes the oxidation of choline to betaine aldehyde and betaine aldehyde to glycine betaine at the same rate. In Pseudomonas putida (strain ATCC 47054 / DSM 6125 / CFBP 8728 / NCIMB 11950 / KT2440), this protein is Oxygen-dependent choline dehydrogenase.